The sequence spans 506 residues: Transcription factor CP2 (506 aa).

The Grh/CP2 DB domain occupies 61–300 (ENKILPFQYV…SPGFNSSHNS (240 aa)). The tract at residues 133 to 395 (EHQQLEGWRW…LFNALKGRIV (263 aa)) is DNA-binding. Disordered regions lie at residues 238–268 (FKPK…YQPS) and 291–316 (SPGF…QPEP). The span at 241–265 (KGADRKQKTDREKMEKRTPQEKEKY) shows a compositional bias: basic and acidic residues. A compositionally biased stretch (polar residues) spans 291 to 300 (SPGFNSSHNS).

The protein belongs to the grh/CP2 family. CP2 subfamily. Component of the SSP (stage selector protein) complex, which appears to be a heteromer of TFCP2 and 2 copies of NFE4.

The protein resides in the nucleus. Functionally, may function as a transcription factor. This is Transcription factor CP2 (tfcp2) from Xenopus laevis (African clawed frog).